The following is a 343-amino-acid chain: Ribosomal RNA small subunit methyltransferase C (343 aa).

It belongs to the methyltransferase superfamily. RsmC family. In terms of assembly, monomer.

Its subcellular location is the cytoplasm. The enzyme catalyses guanosine(1207) in 16S rRNA + S-adenosyl-L-methionine = N(2)-methylguanosine(1207) in 16S rRNA + S-adenosyl-L-homocysteine + H(+). Functionally, specifically methylates the guanine in position 1207 of 16S rRNA in the 30S particle. This chain is Ribosomal RNA small subunit methyltransferase C, found in Pseudoalteromonas atlantica (strain T6c / ATCC BAA-1087).